Consider the following 588-residue polypeptide: Methylcrotonoyl-CoA carboxylase beta chain, mitochondrial (588 aa).

In terms of domain architecture, CoA carboxyltransferase N-terminal spans 72–329 (MNSTLKQLKE…KKQPSPVITE (258 aa)). Positions 72-570 (MNSTLKQLKE…RKVIALSLSA (499 aa)) are carboxyltransferase. Residues 329-570 (ETEEPLYPTS…RKVIALSLSA (242 aa)) form the CoA carboxyltransferase C-terminal domain. Residues 366 to 395 (RFDEFKELYGTTLICGFARVHGMPVGIIAN) are acyl-CoA binding.

Belongs to the AccD/PCCB family. As to quaternary structure, probably a dodecamer composed of six biotin-containing alpha subunits and six beta subunits.

Its subcellular location is the mitochondrion matrix. The catalysed reaction is 3-methylbut-2-enoyl-CoA + hydrogencarbonate + ATP = 3-methyl-(2E)-glutaconyl-CoA + ADP + phosphate + H(+). Its pathway is amino-acid degradation; L-leucine degradation; (S)-3-hydroxy-3-methylglutaryl-CoA from 3-isovaleryl-CoA: step 2/3. Functionally, carboxyltransferase subunit of the 3-methylcrotonyl-CoA carboxylase, an enzyme that catalyzes the conversion of 3-methylcrotonyl-CoA to 3-methylglutaconyl-CoA, a critical step for leucine and isovaleric acid catabolism. The polypeptide is Methylcrotonoyl-CoA carboxylase beta chain, mitochondrial (mccb) (Dictyostelium discoideum (Social amoeba)).